Consider the following 718-residue polypeptide: Adhesin-like cell surface protein MAD1 (718 aa).

Residues 1–19 (MKGAIQFLGALAAVQAVSA) form the signal peptide. 9 consecutive repeat copies span residues 217-243 (PCTEYSCTATDTTTEPAPTEPAPTEPA), 244-265 (PCTEYSCTATDTTTEPAPTEPA), 266-282 (PCTEYSCTATDTTTEPA), 283-309 (PCTEYSCTATDTTTEPAPTEPAPTEPA), 310-336 (PCTEYSCTATDTTTEPAPTEPAPTEPA), 337-358 (PCTEYSCTATDTTTEPAPTEPA), 359-382 (PCTEYSCTATETTSEAVPTTTDEA), 383-402 (PCTDYSCTATEAVPTTTDEA), and 403-420 (PCTEYSCTGVPTSEAVPT). The tract at residues 452–472 (TSIPYETPSPSETETLPPSGT) is disordered. One can recognise a CFEM domain in the interval 462–575 (SETETLPPSG…VTLPPVTTGA (114 aa)). Cystine bridges form between Cys-494–Cys-526, Cys-504–Cys-512, and Cys-514–Cys-548. Heme is bound at residue Asp-509. Residue Gly-693 is the site of GPI-anchor amidated glycine attachment. Positions 694-718 (AASSFKAFSTVMLAGVIGLTALIMA) are cleaved as a propeptide — removed in mature form.

Belongs to the RBT5 family. The GPI-anchor is attached to the protein in the endoplasmic reticulum and serves to target the protein to the cell surface. There, the glucosamine-inositol phospholipid moiety is cleaved off and the GPI-modified mannoprotein is covalently attached via its lipidless GPI glycan remnant to the 1,6-beta-glucan of the outer cell wall layer.

It localises to the secreted. The protein localises to the cell wall. Its subcellular location is the cell membrane. Its function is as follows. Cell surface adhesion protein that plays a key role in switching between the saprophytic lifestyle and the predacious lifestyle (nematode trapping). Likely functions to prevent energy-consuming trap formation in the absence of nematodes, and keeps the fungus in the saprophytic life style. May influence the induction signal of trap formation by limiting the porosity of the cell wall and thus affecting its permeability of nitrogen source. In Arthrobotrys oligospora (strain ATCC 24927 / CBS 115.81 / DSM 1491) (Nematode-trapping fungus), this protein is Adhesin-like cell surface protein MAD1.